The primary structure comprises 152 residues: Transcriptional regulator MraZ (152 aa).

SpoVT-AbrB domains follow at residues 5 to 52 and 81 to 124; these read ATMV…PLPE and ASEC…DEQT.

Belongs to the MraZ family. As to quaternary structure, forms oligomers.

It is found in the cytoplasm. It localises to the nucleoid. Functionally, negatively regulates its own expression and that of the subsequent genes in the proximal part of the division and cell wall (dcw) gene cluster. Acts by binding directly to DNA. May also regulate the expression of genes outside the dcw cluster. The protein is Transcriptional regulator MraZ of Yersinia pseudotuberculosis serotype O:1b (strain IP 31758).